The primary structure comprises 142 residues: MKTFVAKPETVKRDWYVVDATGKTLGRLATELASRLRGKHKAEYTPHVDTGDYIIVINADKVAVTGRKETDKVYYWHTGYVGGIKQATFKEMIARRPEAVIEIAVKGMLPKGPLGRAMFRKLKVYAGSQHEHAAQQPQVLDI.

Belongs to the universal ribosomal protein uL13 family. In terms of assembly, part of the 50S ribosomal subunit.

Its function is as follows. This protein is one of the early assembly proteins of the 50S ribosomal subunit, although it is not seen to bind rRNA by itself. It is important during the early stages of 50S assembly. The chain is Large ribosomal subunit protein uL13 from Mannheimia succiniciproducens (strain KCTC 0769BP / MBEL55E).